The sequence spans 702 residues: Ribosomal RNA large subunit methyltransferase K/L (702 aa).

The THUMP domain occupies 43 to 154 (LVYQSLMWSR…KETASIALDL (112 aa)).

This sequence belongs to the methyltransferase superfamily. RlmKL family.

Its subcellular location is the cytoplasm. It catalyses the reaction guanosine(2445) in 23S rRNA + S-adenosyl-L-methionine = N(2)-methylguanosine(2445) in 23S rRNA + S-adenosyl-L-homocysteine + H(+). The enzyme catalyses guanosine(2069) in 23S rRNA + S-adenosyl-L-methionine = N(2)-methylguanosine(2069) in 23S rRNA + S-adenosyl-L-homocysteine + H(+). In terms of biological role, specifically methylates the guanine in position 2445 (m2G2445) and the guanine in position 2069 (m7G2069) of 23S rRNA. In Shigella dysenteriae serotype 1 (strain Sd197), this protein is Ribosomal RNA large subunit methyltransferase K/L.